The sequence spans 1487 residues: Protein cft1 (1487 aa).

Residues D486–G504 are compositionally biased toward acidic residues. The disordered stretch occupies residues D486–A513.

Belongs to the CFT1 family.

The protein localises to the nucleus. Its function is as follows. RNA-binding component of the cleavage and polyadenylation factor (CPF) complex, which plays a key role in polyadenylation-dependent pre-mRNA 3'-end formation and cooperates with cleavage factors including the CFIA complex and hrp1/CFIB. Involved in poly(A) site recognition. May be involved in coupling transcription termination and mRNA 3'-end formation. The sequence is that of Protein cft1 (paa-3) from Neurospora crassa (strain ATCC 24698 / 74-OR23-1A / CBS 708.71 / DSM 1257 / FGSC 987).